The primary structure comprises 159 residues: uncharacterized protein (159 aa).

The 145-residue stretch at leucine 7 to glutamate 151 folds into the N-acetyltransferase domain.

This is an uncharacterized protein from Bacillus licheniformis (strain ATCC 14580 / DSM 13 / JCM 2505 / CCUG 7422 / NBRC 12200 / NCIMB 9375 / NCTC 10341 / NRRL NRS-1264 / Gibson 46).